The chain runs to 481 residues: Glutamate--tRNA ligase (481 aa).

The short motif at 10 to 20 is the 'HIGH' region element; sequence PSPTGHLHIGN. A 'KMSKS' region motif is present at residues 251 to 255; the sequence is KLSKR. ATP is bound at residue K254.

The protein belongs to the class-I aminoacyl-tRNA synthetase family. Glutamate--tRNA ligase type 1 subfamily. In terms of assembly, monomer.

The protein localises to the cytoplasm. The catalysed reaction is tRNA(Glu) + L-glutamate + ATP = L-glutamyl-tRNA(Glu) + AMP + diphosphate. In terms of biological role, catalyzes the attachment of glutamate to tRNA(Glu) in a two-step reaction: glutamate is first activated by ATP to form Glu-AMP and then transferred to the acceptor end of tRNA(Glu). The chain is Glutamate--tRNA ligase from Exiguobacterium sibiricum (strain DSM 17290 / CCUG 55495 / CIP 109462 / JCM 13490 / 255-15).